A 154-amino-acid polypeptide reads, in one-letter code: Cyclin-dependent protein kinase inhibitor SMR11 (154 aa).

Residues 1–44 (MEQEEPCEAKETASSSIEPKTPNPNVPDSIPAIDSDSSLSEEEI) form a disordered region. Positions 27 to 38 (PDSIPAIDSDSS) are enriched in low complexity.

As to quaternary structure, interacts with CYCB2-4.

Probable cyclin-dependent protein kinase (CDK) inhibitor that functions as a repressor of mitosis in the endoreduplication cell cycle. The protein is Cyclin-dependent protein kinase inhibitor SMR11 of Arabidopsis thaliana (Mouse-ear cress).